We begin with the raw amino-acid sequence, 1363 residues long: Zinc finger protein 541 (1363 aa).

Disordered regions lie at residues 1 to 23 (MEPY…SFSE) and 106 to 137 (LGAL…SPQN). 3 C2H2-type zinc fingers span residues 140–162 (LDCS…YLTH), 168–190 (HVCK…MLTH), and 196–221 (FVCI…EVQH). Disordered regions lie at residues 232 to 269 (EEEA…GSVL), 286 to 387 (KIPS…GWPE), 440 to 532 (VASR…PGGL), and 574 to 741 (QVAT…GYRL). A compositionally biased stretch (polar residues) spans 311 to 321 (SLGSSSCTPAS). Positions 335 to 345 (EETHPPRKEAA) are enriched in basic and acidic residues. Residues 453–465 (PSSTPTSVEPSPS) show a composition bias toward low complexity. The span at 597–608 (GPWPPQTLPPAP) shows a compositional bias: pro residues. Residues 659-670 (PPSLTGPGLLPS) are compositionally biased toward low complexity. The C2H2-type 4 zinc-finger motif lies at 838–860 (FVCKNCSQMFYTEKGLSSHMCFH). The disordered stretch occupies residues 935–978 (QGQEKDGEERDSKESCQYRKRKKRPQPKALFAPPAPSALGEPGP). The span at 937–951 (QEKDGEERDSKESCQ) shows a compositional bias: basic and acidic residues. An ELM2 domain is found at 1063–1155 (PHINVGSRFQ…VALETLLLRG (93 aa)). In terms of domain architecture, SANT spans 1170 to 1221 (TGSDIWTPMEKRLFKKAFCAHKKDFYLIHKMIQTKSVAQCVEYYYIWKKMVK). The tract at residues 1243–1298 (RTEDKVTCSPRERPTHRPTPELKIKTKSYRRESILHSSPSAAPKRTPEPPGSVESQ) is disordered. Over residues 1244 to 1276 (TEDKVTCSPRERPTHRPTPELKIKTKSYRRESI) the composition is skewed to basic and acidic residues. A C2H2-type 5 zinc finger spans residues 1301-1323 (FPCRECERVFDKIKSRNAHMKRH). Residues 1343–1363 (LKEEEEEEEEELGADMGPLQW) are disordered. The segment covering 1345-1355 (EEEEEEEEELG) has biased composition (acidic residues).

Interacts with DNTTIP1. Identified in a complex with KCTD19, HDAC1 and HSPA2. Identified in a complex with HDAC1, HDAC2, DNTTIP1 and KCTD19. Identified in a complex with KCTD19 and HDAC1. As to expression, germ-cell-specific. Specifically present in testicular spermatogenic cells, but not in testicular and mature sperm. During spermatogenesis, it is present in spermatocytes and round spermatids only (at protein level).

It localises to the nucleus. In terms of biological role, transcription regulator which is essential for male fertility and for the completion of meiotic prophase in spermatocytes. Regulates progression of the pachytene stage of meiotic prophase by activating the expression of genes involved in meiosis and post-meiosis during spermatogenesis. Maintains the repression of pre-pachytene transcriptional programs, including meiotic double-strand breaks (DSB) formation genes in pachytene spermatocytes and suppresses aberrant DSB formation after mid-pachytene, thus ensuring meiosis progression. This is Zinc finger protein 541 (Znf541) from Mus musculus (Mouse).